We begin with the raw amino-acid sequence, 383 residues long: Heme A synthase (383 aa).

Helical transmembrane passes span 38–58 (VRVW…VGGL), 127–147 (VIGL…KIPP), 153–173 (LFLL…MVAS), 187–207 (LATH…YIMV), 230–250 (ANWL…VAGI), 287–307 (LVQF…LYVW), 321–341 (AFDW…VTVL), and 344–364 (APWT…CLIL). Histidine 292 contributes to the heme binding site. Residue histidine 352 participates in heme binding.

Belongs to the COX15/CtaA family. Type 2 subfamily. As to quaternary structure, interacts with CtaB. Requires heme b as cofactor.

It localises to the cell membrane. It catalyses the reaction Fe(II)-heme o + 2 A + H2O = Fe(II)-heme a + 2 AH2. It participates in porphyrin-containing compound metabolism; heme A biosynthesis; heme A from heme O: step 1/1. Its function is as follows. Catalyzes the conversion of heme O to heme A by two successive hydroxylations of the methyl group at C8. The first hydroxylation forms heme I, the second hydroxylation results in an unstable dihydroxymethyl group, which spontaneously dehydrates, resulting in the formyl group of heme A. The sequence is that of Heme A synthase from Dinoroseobacter shibae (strain DSM 16493 / NCIMB 14021 / DFL 12).